Reading from the N-terminus, the 473-residue chain is Serine palmitoyltransferase 1 (473 aa).

Topologically, residues 1 to 15 are lumenal; sequence MAMAAEQWVLVEMVQ. The segment at 1 to 66 is interaction with SPTLC2; that stretch reads MAMAAEQWVL…KEELIEEWQP (66 aa). The chain crosses the membrane as a helical span at residues 16 to 36; the sequence is ALYEAPAYHLILEGILILWII. At 37 to 473 the chain is on the cytoplasmic side; sequence RLVFSKTYKL…IREAAQAVLL (437 aa). The residue at position 164 (Tyr-164) is a Phosphotyrosine; by ABL.

Belongs to the class-II pyridoxal-phosphate-dependent aminotransferase family. Component of the serine palmitoyltransferase (SPT) complex, which is also composed of SPTLC2 or SPTLC3 and SPTSSA or SPTSSB. The heterodimer with SPTLC2 or SPTLC3 forms the catalytic core of the enzyme, while SPTSSA or SPTSSB subunits determine substrate specificity. SPT also interacts with ORMDL proteins, especially ORMDL3, which negatively regulate SPT activity in the presence of ceramides. Forms dimers of heterodimers with SPTLC2. Interacts with RTN4. Pyridoxal 5'-phosphate serves as cofactor. Post-translationally, phosphorylation at Tyr-164 inhibits activity and promotes cell survival.

Its subcellular location is the endoplasmic reticulum membrane. It catalyses the reaction L-serine + hexadecanoyl-CoA + H(+) = 3-oxosphinganine + CO2 + CoA. The catalysed reaction is octadecanoyl-CoA + L-serine + H(+) = 3-oxoeicosasphinganine + CO2 + CoA. The enzyme catalyses tetradecanoyl-CoA + L-serine + H(+) = 3-oxohexadecasphinganine + CO2 + CoA. It carries out the reaction dodecanoyl-CoA + L-serine + H(+) = 3-oxotetradecasphinganine + CO2 + CoA. It participates in lipid metabolism; sphingolipid metabolism. Its activity is regulated as follows. SPT complex catalytic activity is negatively regulated by ORMDL proteins, including ORMDL3, in the presence of ceramides. This mechanism allows to maintain ceramide levels at sufficient concentrations for the production of complex sphingolipids, but which prevents the accumulation of ceramides to levels that trigger apoptosis. Component of the serine palmitoyltransferase multisubunit enzyme (SPT) that catalyzes the initial and rate-limiting step in sphingolipid biosynthesis by condensing L-serine and activated acyl-CoA (most commonly palmitoyl-CoA) to form long-chain bases. The SPT complex is also composed of SPTLC2 or SPTLC3 and SPTSSA or SPTSSB. Within this complex, the heterodimer with SPTLC2 or SPTLC3 forms the catalytic core. The composition of the serine palmitoyltransferase (SPT) complex determines the substrate preference. The SPTLC1-SPTLC2-SPTSSA complex shows a strong preference for C16-CoA substrate, while the SPTLC1-SPTLC3-SPTSSA isozyme uses both C14-CoA and C16-CoA as substrates, with a slight preference for C14-CoA. The SPTLC1-SPTLC2-SPTSSB complex shows a strong preference for C18-CoA substrate, while the SPTLC1-SPTLC3-SPTSSB isozyme displays an ability to use a broader range of acyl-CoAs, without apparent preference. Required for adipocyte cell viability and metabolic homeostasis. This is Serine palmitoyltransferase 1 (SPTLC1) from Cricetulus griseus (Chinese hamster).